Here is a 744-residue protein sequence, read N- to C-terminus: Tripartite motif-containing protein 2 (744 aa).

A Phosphoserine modification is found at Ser10. The RING-type zinc finger occupies 23–64 (CSICLERYKNPKVLPCLHTFCERCLQNYIPAHSLTLSCPVCR). The B box-type zinc-finger motif lies at 113–154 (GKPLSCPNHDGNVMEFYCQSCETAMCRECTEGEHAEHPTVPL). Zn(2+)-binding residues include Cys118, His121, Cys141, and His146. Residues 320–421 (TTNAVASETV…IRGSPFKLKV (102 aa)) form a Filamin repeat. A Phosphothreonine modification is found at Thr371. Phosphoserine occurs at positions 375, 424, and 428. The segment at 432-462 (EGVKRRVKSPGSGHVKQKAVKRPASMYSTGK) is disordered. 6 NHL repeats span residues 473-516 (IFRV…FSND), 520-563 (KSRF…FSSD), 564-605 (GKFK…FQPN), 609-652 (VTRF…FNQE), 656-699 (MLKF…FDGS), and 700-743 (GSFL…YRYL).

The protein belongs to the TRIM/RBCC family. As to quaternary structure, forms homooligomers. Interacts with TRIM3; this interaction reduces TRIM2 activity. Interacts with myosin V; myosin V may not be a substrate for ubiquitination. Interacts with NEFL. Interacts with phosphorylated BCL2L11. Interacts with SIRPA. In terms of processing, RING-type zinc finger-dependent and UBE2D1-dependent autoubiquitination.

The protein localises to the cytoplasm. The catalysed reaction is S-ubiquitinyl-[E2 ubiquitin-conjugating enzyme]-L-cysteine + [acceptor protein]-L-lysine = [E2 ubiquitin-conjugating enzyme]-L-cysteine + N(6)-ubiquitinyl-[acceptor protein]-L-lysine.. Its pathway is protein modification; protein ubiquitination. Functionally, UBE2D1-dependent E3 ubiquitin-protein ligase that mediates the ubiquitination of NEFL and of phosphorylated BCL2L11. Plays a neuroprotective function. May play a role in neuronal rapid ischemic tolerance. Plays a role in antiviral immunity and limits New World arenavirus infection independently of its ubiquitin ligase activity. The protein is Tripartite motif-containing protein 2 (TRIM2) of Homo sapiens (Human).